The primary structure comprises 805 residues: Leucine--tRNA ligase (805 aa).

The 'HIGH' region motif lies at 40 to 51 (PYPSGAGLHVGH). The short motif at 576–580 (KMSKS) is the 'KMSKS' region element. Lysine 579 provides a ligand contact to ATP.

The protein belongs to the class-I aminoacyl-tRNA synthetase family.

The protein resides in the cytoplasm. The catalysed reaction is tRNA(Leu) + L-leucine + ATP = L-leucyl-tRNA(Leu) + AMP + diphosphate. In Geobacillus thermodenitrificans (strain NG80-2), this protein is Leucine--tRNA ligase.